Consider the following 556-residue polypeptide: Insulin-like growth factor 2 mRNA-binding protein 2 (556 aa).

RRM domains are found at residues 3-76 and 82-157; these read NKLY…YSVS and RKIQ…YIPD. The residue at position 11 (serine 11) is a Phosphoserine. The segment at 156–188 is disordered; sequence PDEEVSSPSPPQRAQRGDHSSREQGHAPGGTSQ. Residues serine 162 and serine 164 each carry the phosphoserine modification. The span at 170–180 shows a compositional bias: basic and acidic residues; the sequence is QRGDHSSREQG. 4 KH domains span residues 193–258, 274–341, 384–449, and 466–532; these read DFPL…CRMI, EIPL…EIEI, QEIV…QGRI, and KLEA…QRKI. Phosphothreonine is present on threonine 507.

Belongs to the RRM IMP/VICKZ family. Can form homooligomers and heterooligomers with IGF2BP1 and IGF2BP3 in an RNA-dependent manner. Interacts with HNRPD. Interacts with IGF2BP1. Interacts with ELAVL1, DHX9, HNRNPU, MATR3 and PABPC1.

It is found in the nucleus. The protein localises to the cytoplasm. Its subcellular location is the P-body. It localises to the stress granule. In terms of biological role, RNA-binding factor that recruits target transcripts to cytoplasmic protein-RNA complexes (mRNPs). This transcript 'caging' into mRNPs allows mRNA transport and transient storage. It also modulates the rate and location at which target transcripts encounter the translational apparatus and shields them from endonuclease attacks or microRNA-mediated degradation. Preferentially binds to N6-methyladenosine (m6A)-containing mRNAs and increases their stability. Binds to the 5'-UTR of the insulin-like growth factor 2 (IGF2) mRNAs. Binding is isoform-specific. Binds to beta-actin/ACTB and MYC transcripts. Increases MYC mRNA stability by binding to the coding region instability determinant (CRD) and binding is enhanced by m6A-modification of the CRD. The sequence is that of Insulin-like growth factor 2 mRNA-binding protein 2 (IGF2BP2) from Pongo abelii (Sumatran orangutan).